Reading from the N-terminus, the 590-residue chain is Potassium-transporting ATPase potassium-binding subunit (590 aa).

Transmembrane regions (helical) follow at residues 3 to 23, 63 to 83, 134 to 154, and 177 to 197; these read AFLL…RPLG, HYAL…YALQ, GLAV…IALI, and LYVL…QGAI. A disordered region spans residues 217 to 244; the sequence is PKTDAQGNPIKDAQGNPVTEKATTQKQT. The next 8 membrane-spanning stretches (helical) occupy residues 284–304, 312–332, 359–379, 388–408, 411–431, 450–470, 515–535, and 558–578; these read FVQM…FGAM, WAVL…EMWA, FGVV…CGAV, ALGG…FGGV, GLYG…LMIG, SIAI…AVLA, VALG…VLAM, and LFVV…YIPA.

The protein belongs to the KdpA family. The system is composed of three essential subunits: KdpA, KdpB and KdpC.

Its subcellular location is the cell inner membrane. Its function is as follows. Part of the high-affinity ATP-driven potassium transport (or Kdp) system, which catalyzes the hydrolysis of ATP coupled with the electrogenic transport of potassium into the cytoplasm. This subunit binds the periplasmic potassium ions and delivers the ions to the membrane domain of KdpB through an intramembrane tunnel. The protein is Potassium-transporting ATPase potassium-binding subunit of Ralstonia nicotianae (strain ATCC BAA-1114 / GMI1000) (Ralstonia solanacearum).